The primary structure comprises 233 residues: Protein Thf1 (233 aa).

Residues Asp183 to Ala204 are a coiled coil. The disordered stretch occupies residues Ala212–Glu233.

The protein belongs to the THF1 family.

Its function is as follows. May be involved in photosynthetic membrane biogenesis. This is Protein Thf1 from Nostoc sp. (strain PCC 7120 / SAG 25.82 / UTEX 2576).